Here is a 309-residue protein sequence, read N- to C-terminus: Ribonuclease Z (309 aa).

Residues His-63, His-65, Asp-67, His-68, His-141, Asp-212, and His-270 each contribute to the Zn(2+) site. The active-site Proton acceptor is the Asp-67.

It belongs to the RNase Z family. As to quaternary structure, homodimer. Zn(2+) serves as cofactor.

The enzyme catalyses Endonucleolytic cleavage of RNA, removing extra 3' nucleotides from tRNA precursor, generating 3' termini of tRNAs. A 3'-hydroxy group is left at the tRNA terminus and a 5'-phosphoryl group is left at the trailer molecule.. In terms of biological role, zinc phosphodiesterase, which displays some tRNA 3'-processing endonuclease activity. Probably involved in tRNA maturation, by removing a 3'-trailer from precursor tRNA. This chain is Ribonuclease Z, found in Halalkalibacterium halodurans (strain ATCC BAA-125 / DSM 18197 / FERM 7344 / JCM 9153 / C-125) (Bacillus halodurans).